The following is a 198-amino-acid chain: NAD(P)H dehydrogenase (quinone) (198 aa).

Positions 4–189 (ILVLYYSMYG…SIARYQGEYV (186 aa)) constitute a Flavodoxin-like domain. Residues 10–15 (SMYGHI) and 78–80 (TRF) contribute to the FMN site. Position 12 (Y12) interacts with NAD(+). W98 is a substrate binding site. FMN contacts are provided by residues 113 to 118 (STGTGG) and H133.

It belongs to the WrbA family. Requires FMN as cofactor.

It carries out the reaction a quinone + NADH + H(+) = a quinol + NAD(+). The enzyme catalyses a quinone + NADPH + H(+) = a quinol + NADP(+). In Salmonella typhi, this protein is NAD(P)H dehydrogenase (quinone).